Consider the following 175-residue polypeptide: MNVNQNKKVLFLTDIENGLEPILQEATNTSAENMLTIQSYGASISHPYGEIMRSVIFAIYQEDVEEIFVVGTKDKKTSAGNGLTQLETMKDKIQTLDYLFQNCKPEFLGGTVDEWLNENSSDTIEKSVDMIRHHPLVPSYVKVRGLFVNHKGGKPSIAEVPDVKTGQAMPDHCLS.

Belongs to the beta-class carbonic anhydrase family.

The chain is Putative carbonic anhydrase-like protein YbcF (ybcF) from Bacillus subtilis (strain 168).